The following is a 172-amino-acid chain: Large ribosomal subunit protein uL22y (172 aa).

Belongs to the universal ribosomal protein uL22 family.

The polypeptide is Large ribosomal subunit protein uL22y (Hordeum vulgare (Barley)).